The sequence spans 269 residues: Myelin protein zero-like protein 1 (269 aa).

A signal peptide spans 1–35 (MAAPAGAGALIASPDRRRCLWSVLAAALGLLTYGV). Positions 36–146 (SALEVYTPKE…VKNPPDIVVQ (111 aa)) constitute an Ig-like V-type domain. The Extracellular segment spans residues 36-162 (SALEVYTPKE…YVVEKEILPA (127 aa)). N50, N64, and N130 each carry an N-linked (GlcNAc...) asparagine glycan. C58 and C135 are disulfide-bonded. A helical transmembrane segment spans residues 163–183 (FPVWVVVGIVTAVVLGLTLLI). The Cytoplasmic portion of the chain corresponds to 184–269 (TMILAVIYRR…SVVYADIRKN (86 aa)). Positions 202-238 (GCNTSENVSPVKQVSRKSPSDTEGLVKSLPSGSHQGP) are disordered. Positions 203–213 (CNTSENVSPVK) are enriched in polar residues. Phosphoserine is present on residues S206, S210, S219, and S221. Positions 239 to 244 (VIYAQL) match the ITIM motif 1 motif. At Y241 the chain carries Phosphotyrosine. Phosphoserine is present on S260. The ITIM motif 2 signature appears at 261–266 (VVYADI). Y263 bears the Phosphotyrosine mark.

Belongs to the myelin P0 protein family. As to quaternary structure, interacts with phosphorylated PTPN11/SHP-2. Post-translationally, phosphorylated on tyrosine residues upon stimulation with pervanadate and concanavalin-A (ConA). Phosphorylation at Tyr-241 and Tyr-263 is required for interaction with PTPN11/SHP-2. Dephosphorylated by PTPN11/SHP-2 (in vitro). In terms of processing, N-glycosylated.

It localises to the membrane. In terms of biological role, cell surface receptor, which is involved in signal transduction processes. Recruits PTPN11/SHP-2 to the cell membrane and is a putative substrate of PTPN11/SHP-2. Is a major receptor for concanavalin-A (ConA) and is involved in cellular signaling induced by ConA, which probably includes Src family tyrosine-protein kinases. May be involved in regulation of integrin-mediated cell motility. This chain is Myelin protein zero-like protein 1 (MPZL1), found in Bos taurus (Bovine).